The chain runs to 303 residues: Acetyl-coenzyme A carboxylase carboxyl transferase subunit beta (303 aa).

The CoA carboxyltransferase N-terminal domain occupies 29–298 (LWVKCPETGQ…ATPAPASAAA (270 aa)).

Belongs to the AccD/PCCB family. In terms of assembly, acetyl-CoA carboxylase is a heterohexamer composed of biotin carboxyl carrier protein (AccB), biotin carboxylase (AccC) and two subunits each of ACCase subunit alpha (AccA) and ACCase subunit beta (AccD).

The protein localises to the cytoplasm. The enzyme catalyses N(6)-carboxybiotinyl-L-lysyl-[protein] + acetyl-CoA = N(6)-biotinyl-L-lysyl-[protein] + malonyl-CoA. Its pathway is lipid metabolism; malonyl-CoA biosynthesis; malonyl-CoA from acetyl-CoA: step 1/1. Component of the acetyl coenzyme A carboxylase (ACC) complex. Biotin carboxylase (BC) catalyzes the carboxylation of biotin on its carrier protein (BCCP) and then the CO(2) group is transferred by the transcarboxylase to acetyl-CoA to form malonyl-CoA. In Methylobacterium sp. (strain 4-46), this protein is Acetyl-coenzyme A carboxylase carboxyl transferase subunit beta.